We begin with the raw amino-acid sequence, 185 residues long: Ribosome-recycling factor (185 aa).

This sequence belongs to the RRF family.

It is found in the cytoplasm. Its function is as follows. Responsible for the release of ribosomes from messenger RNA at the termination of protein biosynthesis. May increase the efficiency of translation by recycling ribosomes from one round of translation to another. The protein is Ribosome-recycling factor of Streptococcus uberis (strain ATCC BAA-854 / 0140J).